The following is a 543-amino-acid chain: Carboxypeptidase Y homolog A (543 aa).

An N-terminal signal peptide occupies residues 1–17 (MRVLPATLLVGAATAAA). Positions 18–124 (PPFQQILGLP…KLEAYDLRVK (107 aa)) are excised as a propeptide. 5 disulfide bridges follow: C179–C419, C313–C327, C337–C360, C344–C353, and C382–C389. N210 is a glycosylation site (N-linked (GlcNAc...) asparagine). S266 is an active-site residue. D458 is a catalytic residue. N-linked (GlcNAc...) asparagine glycosylation occurs at N509. H520 is a catalytic residue.

Belongs to the peptidase S10 family.

Its subcellular location is the vacuole. It catalyses the reaction Release of a C-terminal amino acid with broad specificity.. In terms of biological role, vacuolar carboxypeptidase involved in degradation of small peptides. Digests preferentially peptides containing an aliphatic or hydrophobic residue in P1' position, as well as methionine, leucine or phenylalanine in P1 position of ester substrate. The sequence is that of Carboxypeptidase Y homolog A (cpyA) from Neosartorya fischeri (strain ATCC 1020 / DSM 3700 / CBS 544.65 / FGSC A1164 / JCM 1740 / NRRL 181 / WB 181) (Aspergillus fischerianus).